The primary structure comprises 566 residues: Probable F-box protein At5g39490 (566 aa).

The region spanning 8-54 (ACLLLMLPEDIFVVISRFLSPSDICNLILCGKSLRALVDSEKTWLVQ) is the F-box domain. A disordered region spans residues 318-338 (LRKSSSSKNTTPSQSEIRHSN). Residues 320 to 332 (KSSSSKNTTPSQS) are compositionally biased toward low complexity.

The protein is Probable F-box protein At5g39490 of Arabidopsis thaliana (Mouse-ear cress).